Reading from the N-terminus, the 442-residue chain is U11/U12 small nuclear ribonucleoprotein 65 kDa protein (442 aa).

One can recognise an RRM 1 domain in the interval 28–102; the sequence is VTLLVRHLPD…KVLQVQRANK (75 aa). Disordered regions lie at residues 101–138, 200–242, and 290–317; these read NKPN…QILS, LALP…GRKR, and SKVT…DSNL. Over residues 102–116 the composition is skewed to basic and acidic residues; sequence KPNDNKKSRQIEESV. Polar residues predominate over residues 117–136; it reads TKGNAFSTVSTNNDSKSGQI. The segment covering 200–209 has biased composition (pro residues); it reads LALPTPPLPK. The segment covering 297-307 has biased composition (acidic residues); sequence YKEESENEDPA. Residues 352–434 enclose the RRM 2 domain; sequence VVLYIKNLAK…KPMIIQFGRT (83 aa).

In terms of assembly, component of the U11/U12 snRNPs that are part of the U12-type spliceosome. Forms a complex with U12 snRNA. As to expression, ubiquitous.

Its subcellular location is the nucleus. Component of minor spliceosome required for U12-type intron splicing and alternative splicing of many introns. Binds specifically to U12 snRNA, which is necessary for branch-point site recognition. Required for normal plant development. This Arabidopsis thaliana (Mouse-ear cress) protein is U11/U12 small nuclear ribonucleoprotein 65 kDa protein (SNRNP65).